The following is a 531-amino-acid chain: Probable mitochondrial-processing peptidase subunit beta, mitochondrial (531 aa).

Residues 1–78 (MAMKNLLSLA…ENPDKRFLKY (78 aa)) constitute a mitochondrion transit peptide. The disordered stretch occupies residues 30–50 (SAIDSVPASASPTALSPPPPH). H141 is a binding site for Zn(2+). E144 serves as the catalytic Proton acceptor. H145 lines the Zn(2+) pocket. Residue E214 is part of the active site. E221 lines the Zn(2+) pocket.

Belongs to the peptidase M16 family. As to quaternary structure, heterodimer of an alpha subunit and a beta subunit subunits, forming the mitochondrial processing protease (MPP) in which the alpha subunit is involved in substrate recognition and binding and the beta subunit is the catalytic subunit. Component of the ubiquinol-cytochrome c oxidoreductase (cytochrome b-c1 complex, complex III, CIII), a multisubunit enzyme composed of 10 subunits. The complex is composed of 3 respiratory subunits cytochrome b (MT-CYB), cytochrome c1 (CYC1-1 or CYC1-2) and Rieske protein (UCR1-1 or UCR1-2), 2 core protein subunits MPPalpha1 (or MPPalpha2) and MPPB, and 5 low-molecular weight protein subunits QCR7-1 (or QCR7-2), UCRQ-1 (or UCRQ-2), QCR9, UCRY and probably QCR6-1 (or QCR6-2). The complex exists as an obligatory dimer and forms supercomplexes (SCs) in the inner mitochondrial membrane with NADH-ubiquinone oxidoreductase (complex I, CI), resulting in different assemblies (supercomplexes SCI(1)III(2) and SCI(2)III(4)). Requires Zn(2+) as cofactor.

The protein resides in the mitochondrion. Its subcellular location is the mitochondrion inner membrane. The catalysed reaction is Release of N-terminal transit peptides from precursor proteins imported into the mitochondrion, typically with Arg in position P2.. Its activity is regulated as follows. Binding to the alpha subunit is required for catalytic activity. Catalytic subunit of the essential mitochondrial processing protease (MPP), which cleaves the mitochondrial sequence off newly imported precursors proteins. Preferentially, cleaves after an arginine at position P2. Functionally, component of the ubiquinol-cytochrome c oxidoreductase, a multisubunit transmembrane complex that is part of the mitochondrial electron transport chain which drives oxidative phosphorylation. The respiratory chain contains 3 multisubunit complexes succinate dehydrogenase (complex II, CII), ubiquinol-cytochrome c oxidoreductase (cytochrome b-c1 complex, complex III, CIII) and cytochrome c oxidase (complex IV, CIV), that cooperate to transfer electrons derived from NADH and succinate to molecular oxygen, creating an electrochemical gradient over the inner membrane that drives transmembrane transport and the ATP synthase. The cytochrome b-c1 complex catalyzes electron transfer from ubiquinol to cytochrome c, linking this redox reaction to translocation of protons across the mitochondrial inner membrane, with protons being carried across the membrane as hydrogens on the quinol. In the process called Q cycle, 2 protons are consumed from the matrix, 4 protons are released into the intermembrane space and 2 electrons are passed to cytochrome c. This is Probable mitochondrial-processing peptidase subunit beta, mitochondrial (MPPbeta) from Arabidopsis thaliana (Mouse-ear cress).